A 312-amino-acid polypeptide reads, in one-letter code: Protein phosphatase 2A catalytic subunit B (312 aa).

The Mn(2+) site is built by Asp-55, His-57, Asp-83, and Asn-115. The active-site Proton donor is His-116. His-165 and His-240 together coordinate Mn(2+).

This sequence belongs to the PPP phosphatase family. PP-2A subfamily. In terms of assembly, component of the Sca1 complex composed of at least gefA, gefH, scaA, phr, and the protein phosphatase 2A subunits pppA and pho2B. Mn(2+) serves as cofactor.

The protein localises to the cell membrane. It carries out the reaction O-phospho-L-seryl-[protein] + H2O = L-seryl-[protein] + phosphate. It catalyses the reaction O-phospho-L-threonyl-[protein] + H2O = L-threonyl-[protein] + phosphate. In terms of biological role, component of the Sca1 complex, a regulator of cell motility, chemotaxis and signal relay. The Sca1 complex is recruited to the plasma membrane in a chemoattractant- and F-actin-dependent manner and is enriched at the leading edge of chemotaxing cells where it regulates F-actin dynamics and signal relay by controlling the activation of rasC and the downstream target of rapamycin complex 2 (TORC2)-Akt/protein kinase B (PKB) pathway. The protein is Protein phosphatase 2A catalytic subunit B of Dictyostelium discoideum (Social amoeba).